We begin with the raw amino-acid sequence, 904 residues long: Pentatricopeptide repeat-containing protein At4g30825, chloroplastic (904 aa).

The N-terminal 61 residues, 1 to 61 (MGSLRFSIPL…SSTRVLDKIR (61 aa)), are a transit peptide targeting the chloroplast. Residues 75–94 (NSASAAPVERSRSSKLSGDQ) form a disordered region. PPR repeat units lie at residues 173–203 (NFVA…LCGF), 209–243 (SYQV…GVRP), 244–274 (NVAT…MRKF), 278–312 (CESA…RVRL), 313–347 (KLEN…GFSP), 348–382 (NIIA…GLEP), 383–417 (DETS…GYKP), 418–452 (NSFN…GCQY), 487–521 (NQTS…DSAF), 522–553 (ESHL…MESD), 557–591 (NLHI…GVVL), 592–622 (DRIG…MDEQ), 628–662 (DVYL…GIHW), 663–697 (NQEM…GFTP), 698–732 (NTVT…GVVD), 733–766 (VISY…GFSV), 767–801 (SLEA…TSGP), 802–836 (DHYT…GLGP), 837–871 (DLCS…NIIP), and 872–904 (DKVT…QMGI).

The protein belongs to the PPR family. P subfamily.

It is found in the plastid. Its subcellular location is the chloroplast. The polypeptide is Pentatricopeptide repeat-containing protein At4g30825, chloroplastic (Arabidopsis thaliana (Mouse-ear cress)).